Here is a 488-residue protein sequence, read N- to C-terminus: Histone deacetylase 2 (488 aa).

The segment at 9–322 (KKKVCYYYDG…WTYETAVALD (314 aa)) is histone deacetylase. Positions 28 and 32 each coordinate 1D-myo-inositol 1,4,5,6-tetrakisphosphate. K75 carries the post-translational modification N6-acetyllysine; alternate. K75 is covalently cross-linked (Glycyl lysine isopeptide (Lys-Gly) (interchain with G-Cter in SUMO2); alternate). The active site involves H142. 8 residues coordinate Ca(2+): D175, D177, H179, F188, T191, V194, S198, and F199. D177 and H179 together coordinate Zn(2+). The residue at position 221 (K221) is an N6-acetyllysine. Residue Y223 participates in Ca(2+) binding. C262 carries the post-translational modification S-nitrosocysteine. D265 provides a ligand contact to Zn(2+). R271 contributes to the 1D-myo-inositol 1,4,5,6-tetrakisphosphate binding site. Residue C274 is modified to S-nitrosocysteine. The tract at residues 389–488 (AVHEDSGDED…GAKSEQLSNP (100 aa)) is disordered. Residues S394, S407, S422, and S424 each carry the phosphoserine modification. Basic and acidic residues predominate over residues 402-417 (PDKRISIRASDKRIAC). Over residues 418 to 428 (DEEFSDSEDEG) the composition is skewed to acidic residues. Over residues 429-481 (EGGRRNVADHKKGAKKARIEEDKKETEDKKTDVKEEDKSKDNSGEKTDPKGAK) the composition is skewed to basic and acidic residues. Glycyl lysine isopeptide (Lys-Gly) (interchain with G-Cter in SUMO2) cross-links involve residues K439, K452, K458, K462, K478, and K481.

It belongs to the histone deacetylase family. HD type 1 subfamily. Part of the core histone deacetylase (HDAC) complex composed of HDAC1, HDAC2, RBBP4 and RBBP7, the core complex associates with SIN3, SAP18 and SAP30 to form the SIN3 HDAC complex. Component of the nucleosome remodeling and deacetylase (NuRD) repressor complex, composed of core proteins MTA1, MTA2, MTA3, RBBP4, RBBP7, HDAC1, HDAC2, MBD2, MBD3, and peripherally associated proteins CDK2AP1, CDK2AP2, GATAD2A, GATAD2B, CHD3, CHD4 and CHD5. The exact stoichiometry of the NuRD complex is unknown, and some subunits such as MBD2 and MBD3, GATAD2A and GATAD2B, and CHD3, CHD4 and CHD5 define mutually exclusive NuRD complexes. Component of a RCOR/GFI/KDM1A/HDAC complex. Component of a BHC histone deacetylase complex that contains HDAC1, HDAC2, HMG20B, KDM1A, RCOR1 and PHF21A. The BHC complex may also contain ZMYM2, ZNF217, ZMYM3, GSE1 and GTF2I. Part of a complex containing the core histones H2A, H2B, H3 and H4, DEK and unphosphorylated DAXX. Part of a complex containing ATR and CHD4. Forms a heterologous complex at least with YY1. Interacts in the late S-phase of DNA-replication with DNMT1 in the other transcriptional repressor complex composed of DNMT1, DMAP1, PCNA, CAF1. Component of a mSin3A corepressor complex that contains SIN3A, SAP130, SUDS3, ARID4B, HDAC1 and HDAC2. Part of a complex composed of TRIM28, HDAC1, HDAC2 and EHMT2. Part of a complex containing at least CDYL, MIER1, MIER2, HDAC1 and HDAC2. Component of a histone deacetylase complex containing DNTTIP1, ZNF541, HDAC1 and HDAC2. Forms a complex comprising APPL1, RUVBL2, APPL2, CTNNB1 and HDAC1. Interacts directly with GFI1. Interacts directly with GFI1B. Interacts with APEX1; the interaction is not dependent on the acetylated status of APEX1. Interacts with ATR. Interacts with BCL6 (non-acetylated form). Interacts with BEND3. Interacts with CBFA2T3. Interacts with CDK2AP1. Interacts with CHD4. Interacts with CHD5. Interacts with CHFR. Interacts with CRY1. Interacts with DNMT1. Interacts with GATAD2A. Interacts with HCFC1. Interacts with HDAC7. Interacts with HDAC10. Interacts with INSM1. Interacts with KDM4A. Interacts with MACROH2A1 (via the non-histone region). Interacts with MBD3L2. Interacts with MTA1, with a preference for sumoylated MTA1. Interacts with NACC2. Interacts with NRIP1. Interacts with PELP1. Interacts with PIMREG. Interacts with PRDM6. Interacts with PWWP2B Interacts with SAP30. Interacts with SAP30L. Interacts with SETDB1. Interacts with SIX3. Interacts with SMARCAD1. Interacts with SNW1. Interacts with SPHK2. Interacts with SPEN/MINT. Interacts (CK2 phosphorylated form) with SP3. Interacts with SUV39H1. Interacts with TSHZ3 (via its N-terminus). Interacts with ZMYND8. Interacts with ZNF431. Interacts with ZNF263; recruited to the SIX3 promoter along with other proteins involved in chromatin modification and transcriptional corepression where it contributes to transcriptional repression. Identified in a complex with HDAC1, KCTD19, DNTTIP1 and ZNF541. Component of the SIN3B complex, which includes SIN3B, HDAC2, PHF12 and MORF4L1; interacts directly with all subunits. Zn(2+) serves as cofactor. Ca(2+) is required as a cofactor. Post-translationally, S-nitrosylated by GAPDH. In neurons, S-nitrosylation at Cys-262 and Cys-274 does not affect enzyme activity, but induces HDAC2 release from chromatin. This in turn increases acetylation of histones surrounding neurotrophin-dependent gene promoters and promotes their transcription. In embryonic cortical neurons, S-Nitrosylation regulates dendritic growth and branching.

The protein localises to the nucleus. The protein resides in the cytoplasm. It catalyses the reaction N(6)-acetyl-L-lysyl-[histone] + H2O = L-lysyl-[histone] + acetate. The enzyme catalyses N(6)-acetyl-L-lysyl-[protein] + H2O = L-lysyl-[protein] + acetate. The catalysed reaction is N(6)-(2E)-butenoyl-L-lysyl-[protein] + H2O = (2E)-2-butenoate + L-lysyl-[protein]. It carries out the reaction N(6)-(2-hydroxyisobutanoyl)-L-lysyl-[protein] + H2O = 2-hydroxy-2-methylpropanoate + L-lysyl-[protein]. It catalyses the reaction N(6)-[(S)-lactoyl]-L-lysyl-[protein] + H2O = (S)-lactate + L-lysyl-[protein]. Its activity is regulated as follows. Inositol tetraphosphate (1D-myo-inositol 1,4,5,6-tetrakisphosphate) may act as an intermolecular glue between HDAC2 and N-Cor repressor complex components. In terms of biological role, histone deacetylase that catalyzes the deacetylation of lysine residues on the N-terminal part of the core histones (H2A, H2B, H3 and H4). Histone deacetylation gives a tag for epigenetic repression and plays an important role in transcriptional regulation, cell cycle progression and developmental events. Histone deacetylases act via the formation of large multiprotein complexes. Forms transcriptional repressor complexes by associating with MAD, SIN3, YY1 and N-COR. Component of a RCOR/GFI/KDM1A/HDAC complex that suppresses, via histone deacetylase (HDAC) recruitment, a number of genes implicated in multilineage blood cell development. Acts as a component of the histone deacetylase NuRD complex which participates in the remodeling of chromatin. Component of the SIN3B complex that represses transcription and counteracts the histone acetyltransferase activity of EP300 through the recognition H3K27ac marks by PHF12 and the activity of the histone deacetylase HDAC2. Also deacetylates non-histone targets: deacetylates TSHZ3, thereby regulating its transcriptional repressor activity. May be involved in the transcriptional repression of circadian target genes, such as PER1, mediated by CRY1 through histone deacetylation. Involved in MTA1-mediated transcriptional corepression of TFF1 and CDKN1A. In addition to protein deacetylase activity, also acts as a protein-lysine deacylase by recognizing other acyl groups: catalyzes removal of (2E)-butenoyl (crotonyl), lactoyl (lactyl) and 2-hydroxyisobutanoyl (2-hydroxyisobutyryl) acyl groups from lysine residues, leading to protein decrotonylation, delactylation and de-2-hydroxyisobutyrylation, respectively. The sequence is that of Histone deacetylase 2 from Mus musculus (Mouse).